The primary structure comprises 550 residues: Glucose-6-phosphate isomerase 2 (550 aa).

Glu-357 acts as the Proton donor in catalysis. Residues His-388 and Lys-514 contribute to the active site. Residues 527–550 (DTGALGHDSSTNGLIRHYRERHGK) are disordered.

It belongs to the GPI family.

Its subcellular location is the cytoplasm. The enzyme catalyses alpha-D-glucose 6-phosphate = beta-D-fructose 6-phosphate. The protein operates within carbohydrate biosynthesis; gluconeogenesis. It functions in the pathway carbohydrate degradation; glycolysis; D-glyceraldehyde 3-phosphate and glycerone phosphate from D-glucose: step 2/4. Catalyzes the reversible isomerization of glucose-6-phosphate to fructose-6-phosphate. The chain is Glucose-6-phosphate isomerase 2 from Chromobacterium violaceum (strain ATCC 12472 / DSM 30191 / JCM 1249 / CCUG 213 / NBRC 12614 / NCIMB 9131 / NCTC 9757 / MK).